The following is a 315-amino-acid chain: N-acetylneuraminate lyase (315 aa).

The aceneuramate site is built by Ser59 and Ser60. Tyr149 acts as the Proton donor in catalysis. The active-site Schiff-base intermediate with substrate is the Lys177. Residues Ser179, Gly202, Asp204, Glu205, and Gly221 each contribute to the aceneuramate site.

Belongs to the DapA family. NanA subfamily. In terms of assembly, homotetramer.

It localises to the cytoplasm. It catalyses the reaction aceneuramate = aldehydo-N-acetyl-D-mannosamine + pyruvate. The protein operates within amino-sugar metabolism; N-acetylneuraminate degradation; D-fructose 6-phosphate from N-acetylneuraminate: step 1/5. Functionally, catalyzes the reversible aldol cleavage of N-acetylneuraminic acid (sialic acid; Neu5Ac) to form pyruvate and N-acetylmannosamine (ManNAc) via a Schiff base intermediate. Cannot use 2,7-anhydro-Neu5Ac. Involved in the degradation of sialic acid, which is present in the host mucus layer and represents a much-coveted source of nutrients for R.gnavus, a prevalent member of the normal gut microbiota. This Mediterraneibacter gnavus (strain ATCC 29149 / DSM 114966 / JCM 6515 / VPI C7-9) (Ruminococcus gnavus) protein is N-acetylneuraminate lyase.